The chain runs to 346 residues: Phosphoribosylformylglycinamidine cyclo-ligase (346 aa).

This sequence belongs to the AIR synthase family.

Its subcellular location is the cytoplasm. It carries out the reaction 2-formamido-N(1)-(5-O-phospho-beta-D-ribosyl)acetamidine + ATP = 5-amino-1-(5-phospho-beta-D-ribosyl)imidazole + ADP + phosphate + H(+). The protein operates within purine metabolism; IMP biosynthesis via de novo pathway; 5-amino-1-(5-phospho-D-ribosyl)imidazole from N(2)-formyl-N(1)-(5-phospho-D-ribosyl)glycinamide: step 2/2. The chain is Phosphoribosylformylglycinamidine cyclo-ligase from Geobacillus thermodenitrificans (strain NG80-2).